Reading from the N-terminus, the 353-residue chain is JmjC domain-containing protein E (353 aa).

Residues 138–348 (YYIQYQNNSL…ETTKYQKQIK (211 aa)) enclose the JmjC domain.

The sequence is that of JmjC domain-containing protein E (jcdE) from Dictyostelium discoideum (Social amoeba).